A 163-amino-acid chain; its full sequence is Large ribosomal subunit protein uL22c (163 aa).

The protein belongs to the universal ribosomal protein uL22 family. Part of the 50S ribosomal subunit.

It localises to the plastid. The protein localises to the chloroplast. In terms of biological role, this protein binds specifically to 23S rRNA. Its function is as follows. The globular domain of the protein is located near the polypeptide exit tunnel on the outside of the subunit, while an extended beta-hairpin is found that lines the wall of the exit tunnel in the center of the 70S ribosome. This is Large ribosomal subunit protein uL22c (rpl22) from Lobularia maritima (Sweet alyssum).